A 75-amino-acid polypeptide reads, in one-letter code: Small ribosomal subunit protein bS18 (75 aa).

This sequence belongs to the bacterial ribosomal protein bS18 family. In terms of assembly, part of the 30S ribosomal subunit. Forms a tight heterodimer with protein bS6.

Functionally, binds as a heterodimer with protein bS6 to the central domain of the 16S rRNA, where it helps stabilize the platform of the 30S subunit. The protein is Small ribosomal subunit protein bS18 of Pseudoalteromonas atlantica (strain T6c / ATCC BAA-1087).